The primary structure comprises 179 residues: MARLREFYKETVVPELVKQFGYKSVMEVPRIEKITLNMGVGEAVADKKVMEHAVSDLERIAGQRPVVTVARKSIAGFKIRDNYPVGCKVTLRRDQMFEFLDRLITIALPRVRDFRGVSGKSFDGRGNYNMGVREQIIFPEIEYDKIDALRGLNITITTTAKTDEEAKALLSLFKFPFKG.

It belongs to the universal ribosomal protein uL5 family. In terms of assembly, part of the 50S ribosomal subunit; part of the 5S rRNA/L5/L18/L25 subcomplex. Contacts the 5S rRNA and the P site tRNA. Forms a bridge to the 30S subunit in the 70S ribosome.

Its function is as follows. This is one of the proteins that bind and probably mediate the attachment of the 5S RNA into the large ribosomal subunit, where it forms part of the central protuberance. In the 70S ribosome it contacts protein S13 of the 30S subunit (bridge B1b), connecting the 2 subunits; this bridge is implicated in subunit movement. Contacts the P site tRNA; the 5S rRNA and some of its associated proteins might help stabilize positioning of ribosome-bound tRNAs. This Neisseria gonorrhoeae (strain ATCC 700825 / FA 1090) protein is Large ribosomal subunit protein uL5.